The chain runs to 274 residues: Rhamnulose-1-phosphate aldolase (274 aa).

Glutamate 117 is a catalytic residue. Zn(2+)-binding residues include histidine 141, histidine 143, and histidine 212.

Belongs to the aldolase class II family. RhaD subfamily. In terms of assembly, homotetramer. It depends on Zn(2+) as a cofactor.

Its subcellular location is the cytoplasm. It carries out the reaction L-rhamnulose 1-phosphate = (S)-lactaldehyde + dihydroxyacetone phosphate. It functions in the pathway carbohydrate degradation; L-rhamnose degradation; glycerone phosphate from L-rhamnose: step 3/3. Catalyzes the reversible cleavage of L-rhamnulose-1-phosphate to dihydroxyacetone phosphate (DHAP) and L-lactaldehyde. In Yersinia pestis, this protein is Rhamnulose-1-phosphate aldolase.